A 382-amino-acid chain; its full sequence is Chaperone protein DnaJ (382 aa).

Residues 6–70 (DYYEILGLPK…EKRAQYDRFG (65 aa)) form the J domain. The CR-type zinc finger occupies 131-213 (GVRKDIDIPR…CGGAGRVRNK (83 aa)). The Zn(2+) site is built by C144, C147, C161, C164, C187, C190, C201, and C204. CXXCXGXG motif repeat units follow at residues 144-151 (CSTCSGTG), 161-168 (CPTCGGTG), 187-194 (CSTCHGRG), and 201-208 (CPVCGGAG). The disordered stretch occupies residues 146 to 168 (TCSGTGAKPGTSPKRCPTCGGTG). The interval 348–382 (FENLSKGKKPQEEEKSKAEKHKKGIFEKVKDAFES) is disordered. Over residues 371-382 (GIFEKVKDAFES) the composition is skewed to basic and acidic residues.

The protein belongs to the DnaJ family. As to quaternary structure, homodimer. Zn(2+) is required as a cofactor.

The protein localises to the cytoplasm. In terms of biological role, participates actively in the response to hyperosmotic and heat shock by preventing the aggregation of stress-denatured proteins and by disaggregating proteins, also in an autonomous, DnaK-independent fashion. Unfolded proteins bind initially to DnaJ; upon interaction with the DnaJ-bound protein, DnaK hydrolyzes its bound ATP, resulting in the formation of a stable complex. GrpE releases ADP from DnaK; ATP binding to DnaK triggers the release of the substrate protein, thus completing the reaction cycle. Several rounds of ATP-dependent interactions between DnaJ, DnaK and GrpE are required for fully efficient folding. Also involved, together with DnaK and GrpE, in the DNA replication of plasmids through activation of initiation proteins. This is Chaperone protein DnaJ from Methanosarcina acetivorans (strain ATCC 35395 / DSM 2834 / JCM 12185 / C2A).